A 222-amino-acid polypeptide reads, in one-letter code: Uracil-DNA glycosylase (222 aa).

Asp66 (proton acceptor) is an active-site residue.

Belongs to the uracil-DNA glycosylase (UDG) superfamily. UNG family.

The protein localises to the cytoplasm. The catalysed reaction is Hydrolyzes single-stranded DNA or mismatched double-stranded DNA and polynucleotides, releasing free uracil.. Its function is as follows. Excises uracil residues from the DNA which can arise as a result of misincorporation of dUMP residues by DNA polymerase or due to deamination of cytosine. This Porphyromonas gingivalis (strain ATCC 33277 / DSM 20709 / CIP 103683 / JCM 12257 / NCTC 11834 / 2561) protein is Uracil-DNA glycosylase.